A 459-amino-acid chain; its full sequence is Probable D-serine dehydratase (459 aa).

N6-(pyridoxal phosphate)lysine is present on Lys-119.

The protein belongs to the serine/threonine dehydratase family. DsdA subfamily. Pyridoxal 5'-phosphate is required as a cofactor.

The enzyme catalyses D-serine = pyruvate + NH4(+). This Geobacillus stearothermophilus (Bacillus stearothermophilus) protein is Probable D-serine dehydratase.